The primary structure comprises 605 residues: Dynein axonemal intermediate chain 2 (605 aa).

7 WD repeats span residues lysine 150–leucine 203, lysine 208–threonine 246, alanine 253–isoleucine 294, threonine 301–arginine 347, lysine 355–glutamate 393, serine 399–phenylalanine 437, and aspartate 443–valine 481. Residues isoleucine 568–alanine 605 are disordered. Over residues proline 579–alanine 605 the composition is skewed to acidic residues.

It belongs to the dynein intermediate chain family. As to quaternary structure, consists of at least two heavy chains and a number of intermediate and light chains. Interacts with DNAAF2. Interacts with DNAAF6/PIH1D3. Interacts with HEATR2; probably involved in outer arm dynein assembly. Interacts with CFAP53. In terms of tissue distribution, highly expressed in trachea and testis. Expressed in respiratory ciliated cells (at protein level).

It localises to the cytoplasm. The protein resides in the cytoskeleton. It is found in the cilium axoneme. The protein localises to the dynein axonemal particle. Its function is as follows. Part of the dynein complex of respiratory cilia. This Homo sapiens (Human) protein is Dynein axonemal intermediate chain 2.